The primary structure comprises 383 residues: Chitinase-3-like protein 1 (383 aa).

The first 21 residues, 1 to 21, serve as a signal peptide directing secretion; that stretch reads MGLRVAQTGFVVLVLLQSCAA. Residues 22 to 383 form the GH18 domain; sequence YKLICYYTSW…NAIKDVLAGV (362 aa). Cys26 and Cys51 form a disulfide bridge. An N-linked (GlcNAc...) asparagine glycan is attached at Asn60. Residues 70-71, 97-100, Tyr141, 204-207, and Lys263 contribute to the chitin site; these read EW, GGWN, and LTYD. Cys300 and Cys364 form a disulfide bridge. Residues 324–338 are important for AKT1 activation and IL8 production; sequence QWVAYDDQESVKNKA. Trp352 provides a ligand contact to chitin.

Belongs to the glycosyl hydrolase 18 family. In terms of assembly, monomer. Detected in mammary gland.

It localises to the secreted. The protein resides in the extracellular space. The protein localises to the cytoplasm. It is found in the perinuclear region. Its subcellular location is the endoplasmic reticulum. Carbohydrate-binding lectin with a preference for chitin. Has no chitinase activity. May play a role in tissue remodeling and in the capacity of cells to respond to and cope with changes in their environment. Plays a role in T-helper cell type 2 (Th2) inflammatory response and IL-13-induced inflammation, regulating allergen sensitization, inflammatory cell apoptosis, dendritic cell accumulation and M2 macrophage differentiation. Facilitates invasion of pathogenic enteric bacteria into colonic mucosa and lymphoid organs. Mediates activation of AKT1 signaling pathway and subsequent IL8 production in colonic epithelial cells. Regulates antibacterial responses in lung by contributing to macrophage bacterial killing, controlling bacterial dissemination and augmenting host tolerance. Also regulates hyperoxia-induced injury, inflammation and epithelial apoptosis in lung. This Bubalus bubalis (Domestic water buffalo) protein is Chitinase-3-like protein 1 (CHI3L1).